Here is a 135-residue protein sequence, read N- to C-terminus: Glutaredoxin-C4 (135 aa).

A Glutaredoxin domain is found at alanine 32–glutamate 132. A disulfide bridge connects residues cysteine 52 and cysteine 55.

It belongs to the glutaredoxin family. CPYC subfamily.

It localises to the cytoplasm. In terms of biological role, has a glutathione-disulfide oxidoreductase activity in the presence of NADPH and glutathione reductase. Reduces low molecular weight disulfides and proteins. This is Glutaredoxin-C4 (GRXC4) from Arabidopsis thaliana (Mouse-ear cress).